We begin with the raw amino-acid sequence, 218 residues long: Alkylmercury lyase (218 aa).

This sequence belongs to the MerB family.

It catalyses the reaction an alkylmercury + H(+) = an alkane + Hg(2+). Functionally, cleaves the carbon-mercury bond of organomercurials such as phenylmercuric acetate. One product is Hg(2+), which is subsequently detoxified by the mercuric reductase. The sequence is that of Alkylmercury lyase from Clostridium butyricum.